The following is a 189-amino-acid chain: Elongation factor P (189 aa).

Belongs to the elongation factor P family.

Its subcellular location is the cytoplasm. It participates in protein biosynthesis; polypeptide chain elongation. Functionally, involved in peptide bond synthesis. Stimulates efficient translation and peptide-bond synthesis on native or reconstituted 70S ribosomes in vitro. Probably functions indirectly by altering the affinity of the ribosome for aminoacyl-tRNA, thus increasing their reactivity as acceptors for peptidyl transferase. This is Elongation factor P from Sinorhizobium fredii (strain NBRC 101917 / NGR234).